Reading from the N-terminus, the 154-residue chain is Myoglobin (154 aa).

In terms of domain architecture, Globin spans Gly-2–Lys-148. His-65 serves as a coordination point for nitrite. His-65 is a binding site for O2. His-94 is a heme b binding site.

In terms of assembly, monomeric.

It is found in the cytoplasm. The protein localises to the sarcoplasm. The enzyme catalyses Fe(III)-heme b-[protein] + nitric oxide + H2O = Fe(II)-heme b-[protein] + nitrite + 2 H(+). The catalysed reaction is H2O2 + AH2 = A + 2 H2O. In terms of biological role, monomeric heme protein which primary function is to store oxygen and facilitate its diffusion within muscle tissues. Reversibly binds oxygen through a pentacoordinated heme iron and enables its timely and efficient release as needed during periods of heightened demand. Depending on the oxidative conditions of tissues and cells, and in addition to its ability to bind oxygen, it also has a nitrite reductase activity whereby it regulates the production of bioactive nitric oxide. Under stress conditions, like hypoxia and anoxia, it also protects cells against reactive oxygen species thanks to its pseudoperoxidase activity. In Struthio camelus (Common ostrich), this protein is Myoglobin (MB).